The following is a 359-amino-acid chain: 5-amino-6-(D-ribitylamino)uracil--L-tyrosine 4-hydroxyphenyl transferase (359 aa).

Residues 45 to 282 (VTYVLNANIN…VYAISRIFFK (238 aa)) form the Radical SAM core domain. 3 residues coordinate [4Fe-4S] cluster: Cys-59, Cys-63, and Cys-66.

It belongs to the radical SAM superfamily. CofH family. Consists of two subunits, CofG and CofH. [4Fe-4S] cluster is required as a cofactor.

It catalyses the reaction 5-amino-6-(D-ribitylamino)uracil + L-tyrosine + S-adenosyl-L-methionine = 5-amino-5-(4-hydroxybenzyl)-6-(D-ribitylimino)-5,6-dihydrouracil + 2-iminoacetate + 5'-deoxyadenosine + L-methionine + H(+). The protein operates within cofactor biosynthesis; coenzyme F0 biosynthesis. Its function is as follows. Catalyzes the radical-mediated synthesis of 5-amino-5-(4-hydroxybenzyl)-6-(D-ribitylimino)-5,6-dihydrouracil from 5-amino-6-(D-ribitylamino)uracil and L-tyrosine. This is 5-amino-6-(D-ribitylamino)uracil--L-tyrosine 4-hydroxyphenyl transferase from Methanococcus vannielii (strain ATCC 35089 / DSM 1224 / JCM 13029 / OCM 148 / SB).